The following is a 428-amino-acid chain: UPF0229 protein YeaH (428 aa).

Residues 78-90 (GNDHFIQNDRIER) are compositionally biased toward basic and acidic residues. The disordered stretch occupies residues 78 to 111 (GNDHFIQNDRIERPQGGGGGGSGSGQGQASQDGE). The segment covering 92–103 (QGGGGGGSGSGQ) has biased composition (gly residues).

Belongs to the UPF0229 family.

The sequence is that of UPF0229 protein YeaH from Salmonella choleraesuis (strain SC-B67).